The chain runs to 450 residues: 23S rRNA (uracil(1939)-C(5))-methyltransferase RlmD (450 aa).

In terms of domain architecture, TRAM spans 12–70; the sequence is SKQLSAKLSLSVNQLDHLGAGIAQHQGKVVFIPGALPDETVTVQFTEQKKNYARAKLIK. [4Fe-4S] cluster-binding residues include Cys-83, Cys-89, Cys-92, and Cys-171. S-adenosyl-L-methionine contacts are provided by Gln-283, Phe-312, Asn-317, Glu-333, Asp-360, and Asp-380. The active-site Nucleophile is Cys-406.

The protein belongs to the class I-like SAM-binding methyltransferase superfamily. RNA M5U methyltransferase family. RlmD subfamily.

The catalysed reaction is uridine(1939) in 23S rRNA + S-adenosyl-L-methionine = 5-methyluridine(1939) in 23S rRNA + S-adenosyl-L-homocysteine + H(+). Catalyzes the formation of 5-methyl-uridine at position 1939 (m5U1939) in 23S rRNA. The chain is 23S rRNA (uracil(1939)-C(5))-methyltransferase RlmD from Shewanella baltica (strain OS155 / ATCC BAA-1091).